Reading from the N-terminus, the 203-residue chain is MIPLIETSALLLGLTALLAYLLGSVPFGIMMARLFGLGDLRSVGSGNIGATNVLRTGNKLAAFLTLVLDAGKGAIAVFLARALLGEDAAQLAGFAAFLGHCFPVFLGFKGGKGVATFLGTLLALAWPIGLAACAIWAITAAVFRMSSLAALVAAALSPLAAFTLGLPSAVVFCAALATLIFLRHRGNISRIAKGQEPKIGKTS.

The next 5 helical transmembrane spans lie at 10–30, 60–80, 88–108, 118–138, and 162–182; these read LLLG…FGIM, LAAF…VFLA, AAQL…FLGF, LGTL…IWAI, and FTLG…LIFL.

This sequence belongs to the PlsY family. As to quaternary structure, probably interacts with PlsX.

The protein localises to the cell inner membrane. The catalysed reaction is an acyl phosphate + sn-glycerol 3-phosphate = a 1-acyl-sn-glycero-3-phosphate + phosphate. It participates in lipid metabolism; phospholipid metabolism. Catalyzes the transfer of an acyl group from acyl-phosphate (acyl-PO(4)) to glycerol-3-phosphate (G3P) to form lysophosphatidic acid (LPA). This enzyme utilizes acyl-phosphate as fatty acyl donor, but not acyl-CoA or acyl-ACP. This Jannaschia sp. (strain CCS1) protein is Glycerol-3-phosphate acyltransferase.